The primary structure comprises 268 residues: Tryptophan synthase alpha chain (268 aa).

Residues glutamate 49 and aspartate 60 each act as proton acceptor in the active site.

It belongs to the TrpA family. In terms of assembly, tetramer of two alpha and two beta chains.

It catalyses the reaction (1S,2R)-1-C-(indol-3-yl)glycerol 3-phosphate + L-serine = D-glyceraldehyde 3-phosphate + L-tryptophan + H2O. Its pathway is amino-acid biosynthesis; L-tryptophan biosynthesis; L-tryptophan from chorismate: step 5/5. Functionally, the alpha subunit is responsible for the aldol cleavage of indoleglycerol phosphate to indole and glyceraldehyde 3-phosphate. The protein is Tryptophan synthase alpha chain of Escherichia coli O6:K15:H31 (strain 536 / UPEC).